We begin with the raw amino-acid sequence, 354 residues long: Variable large protein 15/16 (354 aa).

The signal sequence occupies residues 1–18 (MRKRISAIIMTLFMVLVS). Cys19 carries N-palmitoyl cysteine lipidation. The S-diacylglycerol cysteine moiety is linked to residue Cys19. The tract at residues 333 to 354 (EDKSVEATNTAEATTSGQQAKN) is disordered. Over residues 338–354 (EATNTAEATTSGQQAKN) the composition is skewed to polar residues.

The protein belongs to the variable large protein (Vlp) family. Delta subfamily.

The protein resides in the cell outer membrane. Its function is as follows. The Vlp and Vsp proteins are antigenically distinct proteins, only one vlp or vsp gene is transcriptionally active at any one time. Switching between these genes is a mechanism of host immune response evasion. In Borrelia hermsii, this protein is Variable large protein 15/16.